We begin with the raw amino-acid sequence, 396 residues long: Tryptophan synthase beta chain (396 aa).

An N6-(pyridoxal phosphate)lysine modification is found at K86.

This sequence belongs to the TrpB family. As to quaternary structure, tetramer of two alpha and two beta chains. Pyridoxal 5'-phosphate serves as cofactor.

It carries out the reaction (1S,2R)-1-C-(indol-3-yl)glycerol 3-phosphate + L-serine = D-glyceraldehyde 3-phosphate + L-tryptophan + H2O. Its pathway is amino-acid biosynthesis; L-tryptophan biosynthesis; L-tryptophan from chorismate: step 5/5. Functionally, the beta subunit is responsible for the synthesis of L-tryptophan from indole and L-serine. This chain is Tryptophan synthase beta chain, found in Pectobacterium carotovorum subsp. carotovorum (strain PC1).